The primary structure comprises 294 residues: Proline iminopeptidase (294 aa).

Residues 27–277 enclose the AB hydrolase-1 domain; it reads PPLVLLHGGP…GCGHMSFVEK (251 aa). Residue Ser-105 is the Nucleophile of the active site. Residue Asp-244 is part of the active site. His-271 serves as the catalytic Proton donor.

This sequence belongs to the peptidase S33 family.

The protein localises to the cell envelope. The enzyme catalyses Release of N-terminal proline from a peptide.. Functionally, releases the N-terminal proline from various substrates. The sequence is that of Proline iminopeptidase from Lactobacillus helveticus (strain DPC 4571).